A 270-amino-acid polypeptide reads, in one-letter code: tRNA pseudouridine synthase A (270 aa).

Residue D60 is the Nucleophile of the active site. Positions 107-111 (FHARF) are RNA binding. Residue Y118 participates in substrate binding. The interaction with tRNA stretch occupies residues 168–172 (QCQSR).

Belongs to the tRNA pseudouridine synthase TruA family. In terms of assembly, homodimer.

It catalyses the reaction uridine(38/39/40) in tRNA = pseudouridine(38/39/40) in tRNA. Its function is as follows. Formation of pseudouridine at positions 38, 39 and 40 in the anticodon stem and loop of transfer RNAs. In Citrobacter koseri (strain ATCC BAA-895 / CDC 4225-83 / SGSC4696), this protein is tRNA pseudouridine synthase A.